The sequence spans 171 residues: ATP synthase subunit b (171 aa).

A helical transmembrane segment spans residues 2-22; it reads FVVKMVLGFLILLSPLCATGL.

This sequence belongs to the ATPase B chain family. F-type ATPases have 2 components, F(1) - the catalytic core - and F(0) - the membrane proton channel. F(1) has five subunits: alpha(3), beta(3), gamma(1), delta(1), epsilon(1). F(0) has three main subunits: a(1), b(2) and c(10-14). The alpha and beta chains form an alternating ring which encloses part of the gamma chain. F(1) is attached to F(0) by a central stalk formed by the gamma and epsilon chains, while a peripheral stalk is formed by the delta and b chains.

The protein localises to the cell inner membrane. In terms of biological role, f(1)F(0) ATP synthase produces ATP from ADP in the presence of a proton or sodium gradient. F-type ATPases consist of two structural domains, F(1) containing the extramembraneous catalytic core and F(0) containing the membrane proton channel, linked together by a central stalk and a peripheral stalk. During catalysis, ATP synthesis in the catalytic domain of F(1) is coupled via a rotary mechanism of the central stalk subunits to proton translocation. Its function is as follows. Component of the F(0) channel, it forms part of the peripheral stalk, linking F(1) to F(0). In Helicobacter pylori (strain G27), this protein is ATP synthase subunit b.